A 200-amino-acid chain; its full sequence is Probable GTP-binding protein EngB (200 aa).

The EngB-type G domain maps to 22–197 (DLPEIAFAGR…WQAIQDAVEE (176 aa)). GTP contacts are provided by residues 30 to 37 (GRSNVGKS), 57 to 61 (GRTQL), 78 to 81 (DLPG), 145 to 148 (TKCD), and 176 to 178 (FSA). Mg(2+)-binding residues include serine 37 and threonine 59.

The protein belongs to the TRAFAC class TrmE-Era-EngA-EngB-Septin-like GTPase superfamily. EngB GTPase family. Requires Mg(2+) as cofactor.

Its function is as follows. Necessary for normal cell division and for the maintenance of normal septation. The protein is Probable GTP-binding protein EngB of Trichlorobacter lovleyi (strain ATCC BAA-1151 / DSM 17278 / SZ) (Geobacter lovleyi).